The sequence spans 394 residues: 5-azacytidine-induced protein 2 (394 aa).

Positions 1-197 (MDALVEDDIC…IELRKAKQTD (197 aa)) are homodimerization. 2 coiled-coil regions span residues 40-76 (ALVT…LIAR) and 102-196 (DRDN…AKQT). Residues 216-257 (SDNMQHAYWELKREMSNLHLVTQVQAELLRKLKTSTAIKKAC) are interaction with TBK1 and IKBKE. A phosphoserine mark is found at Ser-318 and Ser-355. The disordered stretch occupies residues 355-379 (SPPKSSETAFGETKSKTLPLPNLPP).

As to quaternary structure, homodimer. Interacts with IKBKE, TBK1 and TICAM1. Interacts with TAX1BP1. Interacts with CALCOCO2. In terms of processing, ubiquitinated via 'Lys-48'-linked polyubiquitination by TRIM38, leading to its degradation.

The protein localises to the cytoplasm. In terms of biological role, adapter protein which binds TBK1 and IKBKE playing a role in antiviral innate immunity. Activates serine/threonine-protein kinase TBK1 and facilitates its oligomerization. Enhances the phosphorylation of NF-kappa-B p65 subunit RELA by TBK1. Promotes TBK1-induced as well as TNF-alpha or PMA-induced activation of NF-kappa-B. Participates in IFNB promoter activation via TICAM1. This Macaca fascicularis (Crab-eating macaque) protein is 5-azacytidine-induced protein 2 (AZI2).